The following is a 450-amino-acid chain: Adenylosuccinate lyase (450 aa).

N(6)-(1,2-dicarboxyethyl)-AMP contacts are provided by residues R9–Y10, H75–D77, and T101–S102. H149 functions as the Proton donor/acceptor in the catalytic mechanism. Residue Q223 coordinates N(6)-(1,2-dicarboxyethyl)-AMP. Catalysis depends on S273, which acts as the Proton donor/acceptor. Residues S274, K279–N281, and S318–V322 contribute to the N(6)-(1,2-dicarboxyethyl)-AMP site.

The protein belongs to the lyase 1 family. Adenylosuccinate lyase subfamily. Homotetramer. Residues from neighboring subunits contribute catalytic and substrate-binding residues to each active site.

It catalyses the reaction N(6)-(1,2-dicarboxyethyl)-AMP = fumarate + AMP. It carries out the reaction (2S)-2-[5-amino-1-(5-phospho-beta-D-ribosyl)imidazole-4-carboxamido]succinate = 5-amino-1-(5-phospho-beta-D-ribosyl)imidazole-4-carboxamide + fumarate. The protein operates within purine metabolism; AMP biosynthesis via de novo pathway; AMP from IMP: step 2/2. Its pathway is purine metabolism; IMP biosynthesis via de novo pathway; 5-amino-1-(5-phospho-D-ribosyl)imidazole-4-carboxamide from 5-amino-1-(5-phospho-D-ribosyl)imidazole-4-carboxylate: step 2/2. Catalyzes two reactions in de novo purine nucleotide biosynthesis. Catalyzes the breakdown of 5-aminoimidazole- (N-succinylocarboxamide) ribotide (SAICAR or 2-[5-amino-1-(5-phospho-beta-D-ribosyl)imidazole-4-carboxamido]succinate) to 5-aminoimidazole-4-carboxamide ribotide (AICAR or 5-amino-1-(5-phospho-beta-D-ribosyl)imidazole-4-carboxamide) and fumarate, and of adenylosuccinate (ADS or N(6)-(1,2-dicarboxyethyl)-AMP) to adenosine monophosphate (AMP) and fumarate. The protein is Adenylosuccinate lyase (purB) of Pyrococcus horikoshii (strain ATCC 700860 / DSM 12428 / JCM 9974 / NBRC 100139 / OT-3).